The following is a 504-amino-acid chain: ATP synthase subunit alpha, chloroplastic (504 aa).

Residue 169 to 176 (GDRQTGKT) participates in ATP binding.

The protein belongs to the ATPase alpha/beta chains family. F-type ATPases have 2 components, CF(1) - the catalytic core - and CF(0) - the membrane proton channel. CF(1) has five subunits: alpha(3), beta(3), gamma(1), delta(1), epsilon(1). CF(0) has four main subunits: a, b, b' and c.

It localises to the plastid. The protein resides in the chloroplast thylakoid membrane. It catalyses the reaction ATP + H2O + 4 H(+)(in) = ADP + phosphate + 5 H(+)(out). Produces ATP from ADP in the presence of a proton gradient across the membrane. The alpha chain is a regulatory subunit. The chain is ATP synthase subunit alpha, chloroplastic from Stigeoclonium helveticum (Green alga).